A 257-amino-acid polypeptide reads, in one-letter code: Probable septum site-determining protein MinC (257 aa).

This sequence belongs to the MinC family. As to quaternary structure, interacts with MinD and FtsZ.

In terms of biological role, cell division inhibitor that blocks the formation of polar Z ring septums. Rapidly oscillates between the poles of the cell to destabilize FtsZ filaments that have formed before they mature into polar Z rings. Prevents FtsZ polymerization. This Burkholderia lata (strain ATCC 17760 / DSM 23089 / LMG 22485 / NCIMB 9086 / R18194 / 383) protein is Probable septum site-determining protein MinC.